A 103-amino-acid polypeptide reads, in one-letter code: uncharacterized protein (103 aa).

3 helical membrane passes run 12 to 34 (GFSW…LTIS), 49 to 66 (TLMS…ALIA), and 79 to 101 (FARG…VAGG).

It localises to the cell membrane. This is an uncharacterized protein from Pasteurella multocida (strain Pm70).